Reading from the N-terminus, the 122-residue chain is uncharacterized protein (122 aa).

The N-terminal stretch at 1–33 (MASTVAGLSMSAESLRLPLLIGVSSGMLSVSDA) is a signal peptide.

This is an uncharacterized protein from Saccharomyces cerevisiae (strain ATCC 204508 / S288c) (Baker's yeast).